A 384-amino-acid chain; its full sequence is tRNA-dihydrouridine(20) synthase [NAD(P)+] (384 aa).

Residues 12–14 and Q88 contribute to the FMN site; that span reads PMV. The active-site Proton donor is C117. FMN is bound by residues K160, H188, 222-224, and 249-250; these read NGA and AE. The disordered stretch occupies residues 359–384; it reads KQKRKQTDHIGSDTKKQKVVPLPTDI. Residues 363–374 show a composition bias toward basic and acidic residues; sequence KQTDHIGSDTKK.

Belongs to the Dus family. Dus2 subfamily. Monomer. FMN is required as a cofactor. N-glycosylated.

It is found in the cytoplasm. The protein resides in the nucleus. The enzyme catalyses 5,6-dihydrouridine(20) in tRNA + NADP(+) = uridine(20) in tRNA + NADPH + H(+). It catalyses the reaction 5,6-dihydrouridine(20) in tRNA + NAD(+) = uridine(20) in tRNA + NADH + H(+). The catalysed reaction is a 5,6-dihydrouridine in mRNA + NAD(+) = a uridine in mRNA + NADH + H(+). It carries out the reaction a 5,6-dihydrouridine in mRNA + NADP(+) = a uridine in mRNA + NADPH + H(+). Catalyzes the NADPH-dependent synthesis of dihydrouridine, a modified base found in the D-loop of most tRNAs. Specifically modifies U20 in cytoplasmic tRNAs. Also able to mediate dihydrouridylation of some mRNAs, thereby affecting their translation. The sequence is that of tRNA-dihydrouridine(20) synthase [NAD(P)+] (SMM1) from Saccharomyces cerevisiae (strain ATCC 204508 / S288c) (Baker's yeast).